A 348-amino-acid polypeptide reads, in one-letter code: MNPPAIDKVPDVTFVVAAYNSADTIVRAIESALAQEGVTVEVVVVDDCSADATPALVAAIPDPRVRLIALDRNRGPGGARNAGIGAARGRWIAVLDSDDTVRPDRLRRMIERADAAGAQIAVDNLDVVSLDGRSLRMFSEAELARLPQLTLPAFIESNVLFRSEHNFGYMKPIFERRFLENQQLRFDEALRIGEDYILLASALACGGRCAVEPSAGYIYHIREGSISRVLRLDHIDAMIAADEAFLRRYALDGLAQKMQHRRMRGFREARSFLVLVEQLKKRSLAGALKTALADPFALRHLSMPIAARLRRLAARFVHPSSHSAPRAAPVTAAAERSPLGNDPRISKG.

The segment at 322–348 (HSAPRAAPVTAAAERSPLGNDPRISKG) is disordered. Over residues 324 to 334 (APRAAPVTAAA) the composition is skewed to low complexity.

The protein belongs to the glycosyltransferase 2 family.

It localises to the cytoplasm. It participates in glycan metabolism; exopolysaccharide biosynthesis. Its function is as follows. Glycosyltransferase required for the synthesis of succinoglycan (EPS I). Needed for the addition of the fifth sugar (glucose), catalyzes the formation of a beta-1,6 linkage between the fourth and fifth sugar. This is Succinoglycan biosynthesis protein ExoO (exoO) from Rhizobium meliloti (strain 1021) (Ensifer meliloti).